Here is a 76-residue protein sequence, read N- to C-terminus: Esculentin-2MT2 (76 aa).

An N-terminal signal peptide occupies residues 1 to 22; that stretch reads MFTLKKSMLLLFFLGTISLSLC. Positions 23–37 are cleaved as a propeptide — removed in mature form; the sequence is EEERSADEDDGEKEV. Cysteines 70 and 76 form a disulfide.

It belongs to the frog skin active peptide (FSAP) family. Esculentin subfamily. In terms of tissue distribution, expressed by the skin glands.

Its subcellular location is the secreted. In terms of biological role, antimicrobial peptide. Active against a variety of Gram-negative and Gram-positive bacterial strains. Active against fungi. Shows strong hemolytic activity against human erythrocytes. The protein is Esculentin-2MT2 of Amolops mantzorum (Sichuan torrent frog).